A 476-amino-acid chain; its full sequence is Glucose-1-phosphate adenylyltransferase (476 aa).

Alpha-D-glucose 1-phosphate contacts are provided by residues Tyr-114, Gly-179, 194–195, and Ser-212; that span reads EK.

The protein belongs to the bacterial/plant glucose-1-phosphate adenylyltransferase family. As to quaternary structure, homotetramer.

It catalyses the reaction alpha-D-glucose 1-phosphate + ATP + H(+) = ADP-alpha-D-glucose + diphosphate. It participates in glycan biosynthesis; glycogen biosynthesis. Its function is as follows. Involved in the biosynthesis of ADP-glucose, a building block required for the elongation reactions to produce glycogen. Catalyzes the reaction between ATP and alpha-D-glucose 1-phosphate (G1P) to produce pyrophosphate and ADP-Glc. This is Glucose-1-phosphate adenylyltransferase from Yersinia pestis.